A 185-amino-acid polypeptide reads, in one-letter code: Peptidyl-tRNA hydrolase (185 aa).

Phenylalanine 14 lines the tRNA pocket. Histidine 19 serves as the catalytic Proton acceptor. Residues tyrosine 64, asparagine 66, and asparagine 112 each contribute to the tRNA site.

It belongs to the PTH family. As to quaternary structure, monomer.

It is found in the cytoplasm. It catalyses the reaction an N-acyl-L-alpha-aminoacyl-tRNA + H2O = an N-acyl-L-amino acid + a tRNA + H(+). Hydrolyzes ribosome-free peptidyl-tRNAs (with 1 or more amino acids incorporated), which drop off the ribosome during protein synthesis, or as a result of ribosome stalling. Functionally, catalyzes the release of premature peptidyl moieties from peptidyl-tRNA molecules trapped in stalled 50S ribosomal subunits, and thus maintains levels of free tRNAs and 50S ribosomes. The polypeptide is Peptidyl-tRNA hydrolase (Exiguobacterium sp. (strain ATCC BAA-1283 / AT1b)).